The primary structure comprises 489 residues: Rhamnulokinase (489 aa).

13-17 (ASSGR) contributes to the ATP binding site. Cys-68 and Cys-222 are oxidised to a cystine. Residues Gly-83 and 236 to 238 (HDT) each bind substrate. Residue Asp-237 is the Proton acceptor of the active site. ATP is bound at residue Thr-259. Asn-296 serves as a coordination point for substrate. Gln-304 serves as a coordination point for ATP. A disulfide bond links Cys-353 and Cys-370. Position 402 (Gly-402) interacts with ATP. Residues Cys-413 and Cys-417 are joined by a disulfide bond.

This sequence belongs to the rhamnulokinase family. As to quaternary structure, monomer. Mg(2+) serves as cofactor.

The enzyme catalyses L-rhamnulose + ATP = L-rhamnulose 1-phosphate + ADP + H(+). It participates in carbohydrate degradation; L-rhamnose degradation; glycerone phosphate from L-rhamnose: step 2/3. Its function is as follows. Involved in the catabolism of L-rhamnose (6-deoxy-L-mannose). Catalyzes the transfer of the gamma-phosphate group from ATP to the 1-hydroxyl group of L-rhamnulose to yield L-rhamnulose 1-phosphate. This chain is Rhamnulokinase, found in Escherichia coli O7:K1 (strain IAI39 / ExPEC).